We begin with the raw amino-acid sequence, 476 residues long: MKVSLPAFEKARVLVVGDVMLDRYWVGPTGRISPEAPVPVVKINQVEDRPGGAANVALNIATLGGQVQLAGLVGQDDTAVALTLGVQTLGVEPQWLSIADKPTITKLRVLSRNQQLIRLDFEEAFDKADSVRLLKQSEALLDSVDVVVLSDYAKGAIDQPRDFIALARSKGVMVLVDPKGSDFGRYHGASLITPNMSEFEAVVGTVTSEADLLEKARGLLKEHHFDAILVTRSEKGMTLVTANAPELHIPTVAREVYDVTGAGDTVISALATSLAAGADLPQACAIANTAAGVVVGKLGTSTVSRIELIEALALHHGESGFGVVSEDQLAYALEQAKLRGERVVMTNGCFDILHAGHVSYLKQAKALGDRLIVAVNDDASVKRLKGEGRPVNQVDRRMAVLAGLASVDWVVPFSEDTPQRIIARLLPDLLVKGGDYKIEDIAGGAEVIAAGGQVQVLGFEDGISTTAIIQNIMANQ.

Residues 1 to 319 (MKVSLPAFEK…EALALHHGES (319 aa)) are ribokinase. 195–198 (NMSE) contributes to the ATP binding site. The active site involves D264. The tract at residues 345–476 (MTNGCFDILH…AIIQNIMANQ (132 aa)) is cytidylyltransferase.

The protein in the N-terminal section; belongs to the carbohydrate kinase PfkB family. In the C-terminal section; belongs to the cytidylyltransferase family. In terms of assembly, homodimer.

It catalyses the reaction D-glycero-beta-D-manno-heptose 7-phosphate + ATP = D-glycero-beta-D-manno-heptose 1,7-bisphosphate + ADP + H(+). The enzyme catalyses D-glycero-beta-D-manno-heptose 1-phosphate + ATP + H(+) = ADP-D-glycero-beta-D-manno-heptose + diphosphate. It functions in the pathway nucleotide-sugar biosynthesis; ADP-L-glycero-beta-D-manno-heptose biosynthesis; ADP-L-glycero-beta-D-manno-heptose from D-glycero-beta-D-manno-heptose 7-phosphate: step 1/4. The protein operates within nucleotide-sugar biosynthesis; ADP-L-glycero-beta-D-manno-heptose biosynthesis; ADP-L-glycero-beta-D-manno-heptose from D-glycero-beta-D-manno-heptose 7-phosphate: step 3/4. In terms of biological role, catalyzes the phosphorylation of D-glycero-D-manno-heptose 7-phosphate at the C-1 position to selectively form D-glycero-beta-D-manno-heptose-1,7-bisphosphate. Its function is as follows. Catalyzes the ADP transfer from ATP to D-glycero-beta-D-manno-heptose 1-phosphate, yielding ADP-D-glycero-beta-D-manno-heptose. This is Bifunctional protein HldE from Shewanella putrefaciens (strain CN-32 / ATCC BAA-453).